The primary structure comprises 392 residues: ADP-ribosylhydrolase ARH1 (392 aa).

Positions 79, 80, and 81 each coordinate Mg(2+). Lysine 109 lines the substrate pocket. The tract at residues 125 to 127 (IQT) is substrate. Glycine 159 lines the substrate pocket. 3 substrate regions span residues 192-194 (HNN), 309-311 (FSG), and 315-316 (SS). 3 residues coordinate Mg(2+): aspartate 348, aspartate 350, and serine 351.

Belongs to the ADP-ribosylglycohydrolase family. As to quaternary structure, monomer. Requires Mg(2+) as cofactor.

The enzyme catalyses N(omega)-(ADP-D-ribosyl)-L-arginyl-[protein] + H2O = ADP-D-ribose + L-arginyl-[protein]. In terms of biological role, specifically acts as an arginine mono-ADP-ribosylhydrolase by mediating the removal of mono-ADP-ribose attached to arginine residues on proteins. The protein is ADP-ribosylhydrolase ARH1 (adprh) of Dictyostelium discoideum (Social amoeba).